Here is a 292-residue protein sequence, read N- to C-terminus: Phosphatidylserine decarboxylase proenzyme (292 aa).

Catalysis depends on charge relay system; for autoendoproteolytic cleavage activity residues Asp-89, His-146, and Ser-252. The Schiff-base intermediate with substrate; via pyruvic acid; for decarboxylase activity role is filled by Ser-252. At Ser-252 the chain carries Pyruvic acid (Ser); by autocatalysis.

This sequence belongs to the phosphatidylserine decarboxylase family. PSD-B subfamily. Prokaryotic type I sub-subfamily. Heterodimer of a large membrane-associated beta subunit and a small pyruvoyl-containing alpha subunit. Pyruvate is required as a cofactor. Is synthesized initially as an inactive proenzyme. Formation of the active enzyme involves a self-maturation process in which the active site pyruvoyl group is generated from an internal serine residue via an autocatalytic post-translational modification. Two non-identical subunits are generated from the proenzyme in this reaction, and the pyruvate is formed at the N-terminus of the alpha chain, which is derived from the carboxyl end of the proenzyme. The autoendoproteolytic cleavage occurs by a canonical serine protease mechanism, in which the side chain hydroxyl group of the serine supplies its oxygen atom to form the C-terminus of the beta chain, while the remainder of the serine residue undergoes an oxidative deamination to produce ammonia and the pyruvoyl prosthetic group on the alpha chain. During this reaction, the Ser that is part of the protease active site of the proenzyme becomes the pyruvoyl prosthetic group, which constitutes an essential element of the active site of the mature decarboxylase.

It localises to the cell membrane. The catalysed reaction is a 1,2-diacyl-sn-glycero-3-phospho-L-serine + H(+) = a 1,2-diacyl-sn-glycero-3-phosphoethanolamine + CO2. The protein operates within phospholipid metabolism; phosphatidylethanolamine biosynthesis; phosphatidylethanolamine from CDP-diacylglycerol: step 2/2. Its function is as follows. Catalyzes the formation of phosphatidylethanolamine (PtdEtn) from phosphatidylserine (PtdSer). In Shewanella baltica (strain OS223), this protein is Phosphatidylserine decarboxylase proenzyme.